Here is a 201-residue protein sequence, read N- to C-terminus: Snake venom metalloproteinase trimerelysin-2 (201 aa).

Gln1 carries the post-translational modification Pyrrolidone carboxylic acid. The Peptidase M12B domain occupies 6–201; sequence RYIELAIVVD…YNPQCILNAP (196 aa). Residue Asn72 is glycosylated (N-linked (GlcNAc...) asparagine). Disulfide bonds link Cys117–Cys196, Cys158–Cys180, and Cys160–Cys163. His142 contacts Zn(2+). Glu143 is a catalytic residue. Zn(2+) is bound by residues His146 and His152.

Belongs to the venom metalloproteinase (M12B) family. P-I subfamily. As to quaternary structure, monomer. It depends on Zn(2+) as a cofactor. Expressed by the venom gland.

It is found in the secreted. It catalyses the reaction Cleavage of 3-Asn-|-Gln-4, 10-His-|-Leu-11 and 14-Ala-|-Leu-15 in the insulin B chain, and the bond Z-Gly-Pro-|-Leu-Gly-Pro in a small molecule substrate of microbial collagenase.. Major venom non-hemorrhagic metalloproteinase. This chain is Snake venom metalloproteinase trimerelysin-2, found in Protobothrops flavoviridis (Habu).